We begin with the raw amino-acid sequence, 344 residues long: Dihydroorotase (344 aa).

His-13 and His-15 together coordinate Zn(2+). Substrate contacts are provided by residues 15 to 17 (HLR) and Asn-41. Zn(2+) is bound by residues Lys-98, His-135, and His-173. Position 98 is an N6-carboxylysine (Lys-98). His-135 contributes to the substrate binding site. Leu-218 is a binding site for substrate. Asp-247 is a binding site for Zn(2+). The active site involves Asp-247. 2 residues coordinate substrate: His-251 and Ala-263.

Belongs to the metallo-dependent hydrolases superfamily. DHOase family. Class II DHOase subfamily. Homodimer. Requires Zn(2+) as cofactor.

It catalyses the reaction (S)-dihydroorotate + H2O = N-carbamoyl-L-aspartate + H(+). It functions in the pathway pyrimidine metabolism; UMP biosynthesis via de novo pathway; (S)-dihydroorotate from bicarbonate: step 3/3. Catalyzes the reversible cyclization of carbamoyl aspartate to dihydroorotate. In Neisseria meningitidis serogroup B (strain ATCC BAA-335 / MC58), this protein is Dihydroorotase.